Consider the following 82-residue polypeptide: Large ribosomal subunit protein uL23 (82 aa).

It belongs to the universal ribosomal protein uL23 family. In terms of assembly, part of the 50S ribosomal subunit. Contacts protein L29.

In terms of biological role, binds to 23S rRNA. One of the proteins that surrounds the polypeptide exit tunnel on the outside of the ribosome. This is Large ribosomal subunit protein uL23 from Methanosarcina acetivorans (strain ATCC 35395 / DSM 2834 / JCM 12185 / C2A).